The chain runs to 432 residues: Adenylosuccinate synthetase (432 aa).

Residues 12–18 (GDEGKGK) and 40–42 (GHT) contribute to the GTP site. The active-site Proton acceptor is Asp13. Mg(2+) contacts are provided by Asp13 and Gly40. Residues 13–16 (DEGK), 38–41 (NAGH), Thr132, Arg146, Gln226, Thr241, and Arg305 contribute to the IMP site. His41 serves as the catalytic Proton donor. 301-307 (TVTGRKR) is a substrate binding site. GTP is bound by residues Arg307, 333–335 (KLD), and 415–417 (STS).

It belongs to the adenylosuccinate synthetase family. As to quaternary structure, homodimer. The cofactor is Mg(2+).

It is found in the cytoplasm. It carries out the reaction IMP + L-aspartate + GTP = N(6)-(1,2-dicarboxyethyl)-AMP + GDP + phosphate + 2 H(+). The protein operates within purine metabolism; AMP biosynthesis via de novo pathway; AMP from IMP: step 1/2. Functionally, plays an important role in the de novo pathway of purine nucleotide biosynthesis. Catalyzes the first committed step in the biosynthesis of AMP from IMP. The protein is Adenylosuccinate synthetase of Agrobacterium fabrum (strain C58 / ATCC 33970) (Agrobacterium tumefaciens (strain C58)).